We begin with the raw amino-acid sequence, 535 residues long: Ribonuclease Y 2 (535 aa).

Residues 1–21 form a helical membrane-spanning segment; the sequence is MLITGLIIGCLLIGLVIGYVV. Residues 207-268 enclose the KH domain; sequence LEHTVTVPNG…IRREVARVAL (62 aa). Positions 334–427 constitute an HD domain; that stretch reads VLLHSIEVAQ…VAAADAISGA (94 aa).

This sequence belongs to the RNase Y family.

The protein resides in the cell membrane. In terms of biological role, endoribonuclease that initiates mRNA decay. This chain is Ribonuclease Y 2, found in Levilactobacillus brevis (strain ATCC 367 / BCRC 12310 / CIP 105137 / JCM 1170 / LMG 11437 / NCIMB 947 / NCTC 947) (Lactobacillus brevis).